The following is a 384-amino-acid chain: Secreted LysM effector LysM14 (384 aa).

Residues 1 to 35 form the signal peptide; that stretch reads MGWSPRWKVMLRGIFNAMISIHILLSLLFAHIATA. A LysM domain is found at 64 to 112; that stretch reads YTYTIQEGDTCAKLAQRYQVTTSNIETWNVGSWGWPGCAKIKQGDFVCL. Residues 185-220 form a disordered region; it reads STTKSAASKTTTTSNPTTTSKTTITSKPTTTSKPTT.

It belongs to the secreted LysM effector family.

The protein localises to the secreted. Its function is as follows. Secreted LysM effector that might have a role in sequestration of chitin oligosaccharides (breakdown products of fungal cell walls that are released during invasion and act as triggers of host immunity) to dampen host defense. The protein is Secreted LysM effector LysM14 of Penicillium expansum (Blue mold rot fungus).